The chain runs to 4760 residues: Nonribosomal peptide synthetase cm3A (4760 aa).

The segment covering 1 to 12 has biased composition (polar residues); it reads MKHLASSENMPT. Positions 1–24 are disordered; it reads MKHLASSENMPTPAQDRAPSPSAM. A Carrier 1 domain is found at 19–95; the sequence is PSPSAMQQEI…ELSRSAECQL (77 aa). Residue Ser56 is modified to O-(pantetheine 4'-phosphoryl)serine. 2 condensation regions span residues 142–570 and 178–571; these read QDIF…EIEQ and PGLS…IEQL. The tract at residues 591-984 is adenylation 1; sequence DEQARLCPDA…GRRDTQVKLR (394 aa). A Carrier 2 domain is found at 1120–1197; it reads REATTLQLQI…KLTEKLGVPE (78 aa). An O-(pantetheine 4'-phosphoryl)serine modification is found at Ser1158. Condensation stretches follow at residues 1210 to 1654 and 1689 to 2125; these read FPLS…KTPS and VEDM…NVTT. The interval 2171 to 2551 is adenylation 2; that stretch reads DGDLTYFELD…DRKDWQIKIR (381 aa). A Carrier 3 domain is found at 2684 to 2762; that stretch reads LPSSETEKTV…ELAHAIDQRS (79 aa). Residue Ser2721 is modified to O-(pantetheine 4'-phosphoryl)serine. Residues 2811–3203 are condensation 4; it reads VEDIYPCTPL…RFKHIFGQLS (393 aa). The interval 3255 to 3647 is adenylation 3; that stretch reads SATTPDRPAV…GRADQQLKIR (393 aa). The Carrier 4 domain occupies 3783 to 3857; it reads TRTEELMQSV…QLAQRATTDA (75 aa). 2 condensation regions span residues 3869 to 4296 and 4340 to 4757; these read EFRL…TLLC and EDIY…EEMG.

It belongs to the nrps family.

It participates in secondary metabolite biosynthesis. Nonribosomal peptide synthetase; part of the gene cluster that mediates the biosynthesis of beauveriolides I and III, cyclodepsipeptides acting as inhibitors of the acyl-CoA:cholesterol acyltransferase. The HR-PKS cm3B initiates the biosynthesis of beauveriolides by iteratively catalyzing the formation of the linear polyketide chain. The ATP-dependent acetyl-CoA ligase cm3D converts the polyketide carboxylic acid to a CoA thioester which id shuttled to the first T domain in the NRPS cm3A by the acetyltransferase cm3C. Cm3A contains 13 domains and assembles the polyketide chain, L-phenylalanine, L-alanine, and D-leucine (or D-allo-isoleucine) to form beauveriolide I (or beauveriolide III). The production of both beauveriolides I and III suggests the substrate adaptability of cm3B, using different amino acids as substrates. The polypeptide is Nonribosomal peptide synthetase cm3A (Cordyceps militaris (strain CM01) (Caterpillar fungus)).